Reading from the N-terminus, the 297-residue chain is Streptogrisin-A (297 aa).

Positions 1–38 (MTFKRFSPLSSTSRYARLLAVASGLVAAAALATPSAVA) are cleaved as a signal peptide. The propeptide occupies 39–115 (APEAESKATV…VKRAEGKFTP (77 aa)). Cys-130 and Cys-150 are disulfide-bonded. Active-site charge relay system residues include His-149, Asp-171, and Ser-253. A disulfide bond links Cys-247 and Cys-274.

Belongs to the peptidase S1 family. As to quaternary structure, monomer.

It carries out the reaction Hydrolysis of proteins with specificity similar to chymotrypsin.. Functionally, has a primary specificity for large aliphatic or aromatic amino acids. This Streptomyces griseus protein is Streptogrisin-A (sprA).